We begin with the raw amino-acid sequence, 96 residues long: Transmembrane protein PMIS2 (96 aa).

Transmembrane regions (helical) follow at residues 31-51 and 76-96; these read VMLA…AIYF and WFNM…VLVL.

Belongs to the CD225/Dispanin family. As to expression, specifically expressed in testis.

It is found in the membrane. May play a role in spermatozoa mobility. In Mus musculus (Mouse), this protein is Transmembrane protein PMIS2.